The primary structure comprises 209 residues: Thiamine-phosphate synthase (209 aa).

4-amino-2-methyl-5-(diphosphooxymethyl)pyrimidine is bound by residues 37–41 and Asn-69; that span reads QLREK. The Mg(2+) site is built by Asp-70 and Asp-89. A 4-amino-2-methyl-5-(diphosphooxymethyl)pyrimidine-binding site is contributed by Ser-108. 134–136 is a binding site for 2-[(2R,5Z)-2-carboxy-4-methylthiazol-5(2H)-ylidene]ethyl phosphate; that stretch reads TNT. A 4-amino-2-methyl-5-(diphosphooxymethyl)pyrimidine-binding site is contributed by Lys-137. Residues Gly-164 and 184–185 contribute to the 2-[(2R,5Z)-2-carboxy-4-methylthiazol-5(2H)-ylidene]ethyl phosphate site; that span reads VS.

Belongs to the thiamine-phosphate synthase family. It depends on Mg(2+) as a cofactor.

The catalysed reaction is 2-[(2R,5Z)-2-carboxy-4-methylthiazol-5(2H)-ylidene]ethyl phosphate + 4-amino-2-methyl-5-(diphosphooxymethyl)pyrimidine + 2 H(+) = thiamine phosphate + CO2 + diphosphate. The enzyme catalyses 2-(2-carboxy-4-methylthiazol-5-yl)ethyl phosphate + 4-amino-2-methyl-5-(diphosphooxymethyl)pyrimidine + 2 H(+) = thiamine phosphate + CO2 + diphosphate. It carries out the reaction 4-methyl-5-(2-phosphooxyethyl)-thiazole + 4-amino-2-methyl-5-(diphosphooxymethyl)pyrimidine + H(+) = thiamine phosphate + diphosphate. The protein operates within cofactor biosynthesis; thiamine diphosphate biosynthesis; thiamine phosphate from 4-amino-2-methyl-5-diphosphomethylpyrimidine and 4-methyl-5-(2-phosphoethyl)-thiazole: step 1/1. Condenses 4-methyl-5-(beta-hydroxyethyl)thiazole monophosphate (THZ-P) and 2-methyl-4-amino-5-hydroxymethyl pyrimidine pyrophosphate (HMP-PP) to form thiamine monophosphate (TMP). In Methanobrevibacter smithii (strain ATCC 35061 / DSM 861 / OCM 144 / PS), this protein is Thiamine-phosphate synthase.